Consider the following 456-residue polypeptide: Nitrogenase molybdenum-iron protein beta chain (456 aa).

Residues C23, C48, C106, and S141 each coordinate [8Fe-7S] cluster.

It belongs to the NifD/NifK/NifE/NifN family. In terms of assembly, tetramer of two alpha and two beta chains. Forms complex with the iron protein (nitrogenase component 2). Requires [8Fe-7S] cluster as cofactor.

It catalyses the reaction N2 + 8 reduced [2Fe-2S]-[ferredoxin] + 16 ATP + 16 H2O = H2 + 8 oxidized [2Fe-2S]-[ferredoxin] + 2 NH4(+) + 16 ADP + 16 phosphate + 6 H(+). This molybdenum-iron protein is part of the nitrogenase complex that catalyzes the key enzymatic reactions in nitrogen fixation. This is Nitrogenase molybdenum-iron protein beta chain (nifK2) from Methanosarcina barkeri.